Consider the following 194-residue polypeptide: Probable chorismate pyruvate-lyase (194 aa).

Substrate-binding residues include Arg77, Leu115, and Glu176.

It belongs to the UbiC family.

The protein resides in the cytoplasm. It catalyses the reaction chorismate = 4-hydroxybenzoate + pyruvate. The protein operates within cofactor biosynthesis; ubiquinone biosynthesis. Its function is as follows. Removes the pyruvyl group from chorismate, with concomitant aromatization of the ring, to provide 4-hydroxybenzoate (4HB) for the ubiquinone pathway. This is Probable chorismate pyruvate-lyase from Cupriavidus pinatubonensis (strain JMP 134 / LMG 1197) (Cupriavidus necator (strain JMP 134)).